The chain runs to 310 residues: Protein-L-isoaspartate O-methyltransferase (310 aa).

Positions 1–41 (MSGERAKRFPLALEDLKRAPRKSEGRPGERQTAGAVPKAAD) are disordered. Residues 14-29 (EDLKRAPRKSEGRPGE) are compositionally biased toward basic and acidic residues. Serine 157 is a catalytic residue.

Belongs to the methyltransferase superfamily. L-isoaspartyl/D-aspartyl protein methyltransferase family.

It localises to the cytoplasm. The catalysed reaction is [protein]-L-isoaspartate + S-adenosyl-L-methionine = [protein]-L-isoaspartate alpha-methyl ester + S-adenosyl-L-homocysteine. Its function is as follows. Catalyzes the methyl esterification of L-isoaspartyl residues in peptides and proteins that result from spontaneous decomposition of normal L-aspartyl and L-asparaginyl residues. It plays a role in the repair and/or degradation of damaged proteins. The chain is Protein-L-isoaspartate O-methyltransferase from Burkholderia cenocepacia (strain HI2424).